We begin with the raw amino-acid sequence, 318 residues long: Beta-ketoacyl-[acyl-carrier-protein] synthase III (318 aa).

Active-site residues include Cys113 and His245. Residues Gln246 to Arg250 form an ACP-binding region. The active site involves Asn275.

Belongs to the thiolase-like superfamily. FabH family. In terms of assembly, homodimer.

It localises to the cytoplasm. The catalysed reaction is malonyl-[ACP] + acetyl-CoA + H(+) = 3-oxobutanoyl-[ACP] + CO2 + CoA. The protein operates within lipid metabolism; fatty acid biosynthesis. Catalyzes the condensation reaction of fatty acid synthesis by the addition to an acyl acceptor of two carbons from malonyl-ACP. Catalyzes the first condensation reaction which initiates fatty acid synthesis and may therefore play a role in governing the total rate of fatty acid production. Possesses both acetoacetyl-ACP synthase and acetyl transacylase activities. Its substrate specificity determines the biosynthesis of branched-chain and/or straight-chain of fatty acids. In Wolbachia pipientis wMel, this protein is Beta-ketoacyl-[acyl-carrier-protein] synthase III.